Consider the following 170-residue polypeptide: Gas vesicle protein A2 (170 aa).

Residues 86-170 (SPMAKTVGRA…PRRRTEEEDR (85 aa)) form a disordered region. Composition is skewed to basic and acidic residues over residues 104-119 (LTDK…HEHE) and 127-137 (DRPRAGAERGR). The span at 138–148 (STQRPRSRPAA) shows a compositional bias: basic residues. The segment covering 149–170 (RPRDEDDRPRSRPRRRTEEEDR) has biased composition (basic and acidic residues).

It belongs to the gas vesicle GvpA family. The gas vesicle shell is 2 nm thick and consists of a single layer of this protein. It forms helical ribs nearly perpendicular to the long axis of the vesicle.

It is found in the gas vesicle shell. Its function is as follows. Gas vesicles are hollow, gas filled proteinaceous nanostructures found in some microorganisms. During planktonic growth they allow positioning of the organism at a favorable depth for light or nutrient acquisition. GvpA forms the protein shell. It is not clear what function GVs perform in soil bacteria. This Streptomyces coelicolor (strain ATCC BAA-471 / A3(2) / M145) protein is Gas vesicle protein A2.